The chain runs to 181 residues: MSDTPAQTPEPSKKTPEPSGVDLARVALRAAKEQARARGDAAQQKRQARRGGLRSGARADGRDPMALGAAINRLLTERGWETPAAVGGVMGRWPQIVGEDLAKHCVPQRYDEDERVLTVQCDSTAWATQLRLLAPQLVARLNEDLGHGTVRLLKVQGPGGPARRYGPLRAPGSTGPGDTYG.

Residues 1 to 10 (MSDTPAQTPE) show a composition bias toward polar residues. 2 disordered regions span residues 1–64 (MSDT…GRDP) and 156–181 (QGPG…DTYG). Basic and acidic residues predominate over residues 30–39 (AAKEQARARG).

This sequence belongs to the UPF0232 family.

The chain is UPF0232 protein SAV_4320 from Streptomyces avermitilis (strain ATCC 31267 / DSM 46492 / JCM 5070 / NBRC 14893 / NCIMB 12804 / NRRL 8165 / MA-4680).